Consider the following 406-residue polypeptide: MKAVVFIIDGLGDRPNKQGNTPLKEAHTPTMDKMAKEGICGIMNAVDIGVGPGSDTAHLALLGYNPYTTYTGRGPFEACGVGIDVKAGDIAFRCNFATVDDNLTIIDRRAGRIKNTEELEKAIDGLKVDGVEVIFKQSGGYRAALVLRGPNLSDKITEGDPHKEGVPIPEVKPLDNSEDAKRTATILNKVIKIAHDKLNSHPVNEERRKNGELPANAILPRGVGMVPNIQPFNEKNDIKGACIAGTGLIKGIAKMVQLDYIDVEGATGTPTTNLKNKADALLNAIKTYDFVLINVKGADEASHDGNYELKKEFIEKIDKMLKYILENIDKNEVYITLTGDHSTPIEKKDHSADPIPIVIWGKSVRVDAVETFDEFSTYKGGLCWIKGENIVPILLDLTGKAHKYGA.

The span at 156-165 (ITEGDPHKEG) shows a compositional bias: basic and acidic residues. Positions 156–177 (ITEGDPHKEGVPIPEVKPLDNS) are disordered.

It belongs to the BPG-independent phosphoglycerate mutase family. A-PGAM subfamily.

It catalyses the reaction (2R)-2-phosphoglycerate = (2R)-3-phosphoglycerate. It participates in carbohydrate degradation; glycolysis; pyruvate from D-glyceraldehyde 3-phosphate: step 3/5. Catalyzes the interconversion of 2-phosphoglycerate and 3-phosphoglycerate. The sequence is that of 2,3-bisphosphoglycerate-independent phosphoglycerate mutase from Methanococcus aeolicus (strain ATCC BAA-1280 / DSM 17508 / OCM 812 / Nankai-3).